A 268-amino-acid polypeptide reads, in one-letter code: Tropinone reductase homolog At2g29370 (268 aa).

22–46 (LVTGGSKGLGKAVVEELAMLGARVH) is an NADP(+) binding site. Ser-155 is a binding site for substrate. Tyr-168 (proton acceptor) is an active-site residue.

This sequence belongs to the short-chain dehydrogenases/reductases (SDR) family. SDR65C subfamily.

The polypeptide is Tropinone reductase homolog At2g29370 (Arabidopsis thaliana (Mouse-ear cress)).